Reading from the N-terminus, the 207-residue chain is Ras-related protein Rab-8B (207 aa).

The GTP site is built by S17, G18, V19, G20, K21, T22, C23, T35, S39, and T40. T22 is a Mg(2+) binding site. Short sequence motifs (switch) lie at residues 31–45 and 63–80; these read DAFN…GIDF and DTAG…YYRG. Mg(2+) contacts are provided by T40 and D63. G66 lines the GTP pocket. T72 bears the Phosphothreonine mark. 5 residues coordinate GTP: N121, K122, D124, A152, and K153. Residues S180 and S183 each carry the phosphoserine modification. The residue at position 204 (C204) is a Cysteine methyl ester. Residue C204 is the site of S-geranylgeranyl cysteine attachment. Positions 205–207 are cleaved as a propeptide — removed in mature form; the sequence is LLL.

It belongs to the small GTPase superfamily. Rab family. As to quaternary structure, associated with actin, delta-catenin and alpha and beta tubulins. Interacts with OTOF. Interacts with PEX5R. Interacts with RAB3IP. Interacts with VIM. Interacts with CDH1. Interacts with MICALL2. Interacts with GDI1, GDI2, CHML and CHM; phosphorylation at Thr-72 disrupts these interactions. Interacts with MICAL1. Requires Mg(2+) as cofactor. Post-translationally, phosphorylation of Thr-72 in the switch II region by LRRK2 prevents the association of RAB regulatory proteins, including CHM, CHML and RAB GDP dissociation inhibitors GDI1 and GDI2.

It is found in the cell membrane. Its subcellular location is the cytoplasmic vesicle. It localises to the phagosome membrane. The protein resides in the endosome membrane. The enzyme catalyses GTP + H2O = GDP + phosphate + H(+). Regulated by guanine nucleotide exchange factors (GEFs) including RAB3IP/RABIN8 which promotes the exchange of bound GDP for free GTP. Regulated by GTPase activating proteins (GAPs) which increase the GTP hydrolysis activity. Inhibited by GDP dissociation inhibitors (GDIs). Functionally, the small GTPases Rab are key regulators of intracellular membrane trafficking, from the formation of transport vesicles to their fusion with membranes. Rabs cycle between an inactive GDP-bound form and an active GTP-bound form that is able to recruit to membranes different sets of downstream effectors directly responsible for vesicle formation, movement, tethering and fusion. RAB8B may be involved in polarized vesicular trafficking and neurotransmitter release. May participate in cell junction dynamics in Sertoli cells. May also participate in the export of a subset of neosynthesized proteins through a Rab8-Rab10-Rab11-dependent endososomal export route. This chain is Ras-related protein Rab-8B (RAB8B), found in Bos taurus (Bovine).